Consider the following 272-residue polypeptide: Expansin-B16 (272 aa).

The signal sequence occupies residues 1–25 (MAAFSSSSSAPMLIRSVLFVSLLSA). The 111-residue stretch at 63 to 173 (GGACGYGTLV…RRTACKYGGK (111 aa)) folds into the Expansin-like EG45 domain. 3 cysteine pairs are disulfide-bonded: Cys66–Cys95, Cys98–Cys168, and Cys103–Cys109. In terms of domain architecture, Expansin-like CBD spans 186–267 (FWLSLLVEFE…NWTPKATYTS (82 aa)).

The protein belongs to the expansin family. Expansin B subfamily.

The protein resides in the secreted. Its subcellular location is the cell wall. It localises to the membrane. Its function is as follows. May cause loosening and extension of plant cell walls by disrupting non-covalent bonding between cellulose microfibrils and matrix glucans. No enzymatic activity has been found. May be required for rapid internodal elongation in deepwater rice during submergence. This Oryza sativa subsp. japonica (Rice) protein is Expansin-B16 (EXPB16).